A 311-amino-acid chain; its full sequence is Large ribosomal subunit protein uL22 (311 aa).

Belongs to the universal ribosomal protein uL22 family. In terms of assembly, part of the 50S ribosomal subunit.

Its function is as follows. This protein binds specifically to 23S rRNA; its binding is stimulated by other ribosomal proteins, e.g. L4, L17, and L20. It is important during the early stages of 50S assembly. It makes multiple contacts with different domains of the 23S rRNA in the assembled 50S subunit and ribosome. Functionally, the globular domain of the protein is located near the polypeptide exit tunnel on the outside of the subunit, while an extended beta-hairpin is found that lines the wall of the exit tunnel in the center of the 70S ribosome. This chain is Large ribosomal subunit protein uL22 (rplV), found in Ureaplasma parvum serovar 3 (strain ATCC 27815 / 27 / NCTC 11736).